The following is a 472-amino-acid chain: MKSVKDFLNKHNLTLKGATIIVGVSGGPDSMALLHALHTLCGRSANVIAAHVDHRFRGAESEEDMRFVQAYCKAEQLVCETAQINVTAYAQEKGLNKQAAARDCRYQFFEEIMSKHQADYLALAHHGDDQVETMLMKLAKGTLGTGLAGMQPVRRFGTGRIIRPFLTITKEEILHYCHENGLSYRTDESNAKDDYTRNRFRKTVLPFLKQESPDVHKRFQKVSEALTEDEQFLQSLTKDEMNKVITSQSNTSVEINSSQLLALPMPLQRRGVQLILNYLYENVPSSFSAHHIQQFLDWAENGGPSGVLDFPKGLKVVKSYQTCLFTFEQWQCKNVPFEYQISGAADETAVLPNGYLIEARHYADSPEEHGNAVFITSEKKVRFPLTIRTRKAGDRIKLKGMNGSKKVKDIFIDKKLPLQERDNWPIVTDASGEIIWIPGLKKSIFEDLVIPNSDRIVLQYRQHEKCRGQAKS.

Residue 25–30 participates in ATP binding; the sequence is SGGPDS.

The protein belongs to the tRNA(Ile)-lysidine synthase family.

It is found in the cytoplasm. It catalyses the reaction cytidine(34) in tRNA(Ile2) + L-lysine + ATP = lysidine(34) in tRNA(Ile2) + AMP + diphosphate + H(+). Its function is as follows. Ligates lysine onto the cytidine present at position 34 of the AUA codon-specific tRNA(Ile) that contains the anticodon CAU, in an ATP-dependent manner. Cytidine is converted to lysidine, thus changing the amino acid specificity of the tRNA from methionine to isoleucine. The polypeptide is tRNA(Ile)-lysidine synthase (tilS) (Bacillus subtilis (strain 168)).